A 231-amino-acid polypeptide reads, in one-letter code: MASAVFEGTSLVNMFVRGCWVNGIRRLIVSRRGDEEEFFEIRTEWSDRSVLYLHRSLADLGRLWQRLRDAFPEDRSELAQGPLRQGLVAIKEAHDIETRLNEVEKLLKTIISMPCKYSRSEVVLTFFERSPLDQVLKNDNVHKIQPSFQSPVKISEIMRSNGFCLANTETIVIDHSIPNGRDQQLGVDPTEHLFENGSEFPSELEDGDDPAAYVTNLSYYHLVPFETDIWD.

A PX domain is found at 1-134; it reads MASAVFEGTS…TFFERSPLDQ (134 aa).

In Homo sapiens (Human), this protein is PX domain-containing protein 1 (PXDC1).